The following is a 312-amino-acid chain: Beta-ketoacyl-[acyl-carrier-protein] synthase III (312 aa).

Active-site residues include Cys-112 and His-237. Residues 238-242 (QANIR) are ACP-binding. Asn-267 is a catalytic residue.

It belongs to the thiolase-like superfamily. FabH family. Homodimer.

It is found in the cytoplasm. The catalysed reaction is malonyl-[ACP] + acetyl-CoA + H(+) = 3-oxobutanoyl-[ACP] + CO2 + CoA. Its pathway is lipid metabolism; fatty acid biosynthesis. Catalyzes the condensation reaction of fatty acid synthesis by the addition to an acyl acceptor of two carbons from malonyl-ACP. Catalyzes the first condensation reaction which initiates fatty acid synthesis and may therefore play a role in governing the total rate of fatty acid production. Possesses both acetoacetyl-ACP synthase and acetyl transacylase activities. Its substrate specificity determines the biosynthesis of branched-chain and/or straight-chain of fatty acids. In Listeria welshimeri serovar 6b (strain ATCC 35897 / DSM 20650 / CCUG 15529 / CIP 8149 / NCTC 11857 / SLCC 5334 / V8), this protein is Beta-ketoacyl-[acyl-carrier-protein] synthase III.